We begin with the raw amino-acid sequence, 322 residues long: AA9 family lytic polysaccharide monooxygenase B (322 aa).

An N-terminal signal peptide occupies residues 1–17 (MFSKSIIAASLLTAVTA). A Cu(2+)-binding site is contributed by histidine 18. N-linked (GlcNAc...) asparagine glycans are attached at residues asparagine 53 and asparagine 68. Cysteine 56 and cysteine 173 are disulfide-bonded. Position 87 (histidine 87) interacts with Cu(2+). Residues asparagine 121 and asparagine 133 are each glycosylated (N-linked (GlcNAc...) asparagine). O2-binding residues include histidine 159 and glutamine 168. Tyrosine 170 contributes to the Cu(2+) binding site. Asparagine 197 is a glycosylation site (N-linked (GlcNAc...) asparagine).

Belongs to the polysaccharide monooxygenase AA9 family. It depends on Cu(2+) as a cofactor.

The protein resides in the secreted. It carries out the reaction [(1-&gt;4)-beta-D-glucosyl]n+m + reduced acceptor + O2 = 4-dehydro-beta-D-glucosyl-[(1-&gt;4)-beta-D-glucosyl]n-1 + [(1-&gt;4)-beta-D-glucosyl]m + acceptor + H2O.. Its function is as follows. Lytic polysaccharide monooxygenase (LPMO) that depolymerizes crystalline and amorphous polysaccharides via the oxidation of scissile alpha- or beta-(1-4)-glycosidic bonds, yielding C1 and C4 oxidation products. Catalysis by LPMOs requires the reduction of the active-site copper from Cu(II) to Cu(I) by a reducing agent and H(2)O(2) or O(2) as a cosubstrate. This chain is AA9 family lytic polysaccharide monooxygenase B, found in Botryotinia fuckeliana (strain B05.10) (Noble rot fungus).